The chain runs to 320 residues: Protein TsetseEP (320 aa).

Residues 1–19 form the signal peptide; sequence MKFFISFAFLCLVLSCVAA. Residues 192 to 320 are disordered; sequence GLPEPEPEPE…ESKPNSLFNF (129 aa). Acidic residues predominate over residues 194 to 308; it reads PEPEPEPEPE…EPEPEPEPQP (115 aa). A 59 X 2 AA tandem repeats of P-E region spans residues 194–311; the sequence is PEPEPEPEPE…PEPEPQPEPE (118 aa).

As to expression, expressed in the gut, but not salivary glands, of female and male flies (at protein level). Present in vesicles in midgut cells and in the lumen of the gut.

It is found in the secreted. The sequence is that of Protein TsetseEP from Glossina morsitans morsitans (Savannah tsetse fly).